The following is a 265-amino-acid chain: Adenosine 5'-phosphosulfate reductase (265 aa).

Residues cysteine 135, cysteine 136, cysteine 218, and cysteine 221 each coordinate [4Fe-4S] cluster. Catalysis depends on cysteine 246, which acts as the Nucleophile; cysteine thiosulfonate intermediate.

It belongs to the PAPS reductase family. CysH subfamily. It depends on [4Fe-4S] cluster as a cofactor.

It is found in the cytoplasm. It catalyses the reaction [thioredoxin]-disulfide + sulfite + AMP + 2 H(+) = adenosine 5'-phosphosulfate + [thioredoxin]-dithiol. It functions in the pathway sulfur metabolism; hydrogen sulfide biosynthesis; sulfite from sulfate. Its function is as follows. Catalyzes the formation of sulfite from adenosine 5'-phosphosulfate (APS) using thioredoxin as an electron donor. This is Adenosine 5'-phosphosulfate reductase from Rhizobium meliloti (strain 1021) (Ensifer meliloti).